A 146-amino-acid polypeptide reads, in one-letter code: Hemoglobin subunit beta (146 aa).

At Val1 the chain carries N-acetylvaline. Positions 2–146 (HLTGEEKAAV…VANALAHKYH (145 aa)) constitute a Globin domain. Thr12 is subject to Phosphothreonine. Ser44 is modified (phosphoserine). Lys59 bears the N6-acetyllysine mark. His63 is a heme b binding site. At Lys82 the chain carries N6-acetyllysine. Position 92 (His92) interacts with heme b. Cys93 carries the S-nitrosocysteine modification. The residue at position 144 (Lys144) is an N6-acetyllysine.

It belongs to the globin family. As to quaternary structure, heterotetramer of two alpha chains and two beta chains. As to expression, red blood cells.

Functionally, involved in oxygen transport from the lung to the various peripheral tissues. This is Hemoglobin subunit beta (HBB) from Ailurus fulgens (Himalayan red panda).